Here is a 234-residue protein sequence, read N- to C-terminus: Orotidine 5'-phosphate decarboxylase (234 aa).

Substrate contacts are provided by residues Asp14, Lys36, 63-72 (DLKFHDIPNT), Thr123, Arg184, Gln193, Gly213, and Arg214. Lys65 serves as the catalytic Proton donor.

It belongs to the OMP decarboxylase family. Type 1 subfamily. In terms of assembly, homodimer.

It catalyses the reaction orotidine 5'-phosphate + H(+) = UMP + CO2. It participates in pyrimidine metabolism; UMP biosynthesis via de novo pathway; UMP from orotate: step 2/2. In terms of biological role, catalyzes the decarboxylation of orotidine 5'-monophosphate (OMP) to uridine 5'-monophosphate (UMP). This chain is Orotidine 5'-phosphate decarboxylase, found in Psychromonas ingrahamii (strain DSM 17664 / CCUG 51855 / 37).